A 124-amino-acid polypeptide reads, in one-letter code: Fluoride-specific ion channel FluC (124 aa).

Transmembrane regions (helical) follow at residues 5-27 (LFVA…LMLQ), 42-62 (ILGS…EVSP), 63-83 (EIKA…STFS), and 95-115 (LVKA…VVYL). Gly-74 and Thr-77 together coordinate Na(+).

This sequence belongs to the fluoride channel Fluc/FEX (TC 1.A.43) family.

The protein localises to the cell inner membrane. It carries out the reaction fluoride(in) = fluoride(out). With respect to regulation, na(+) is not transported, but it plays an essential structural role and its presence is essential for fluoride channel function. Its function is as follows. Fluoride-specific ion channel. Important for reducing fluoride concentration in the cell, thus reducing its toxicity. This is Fluoride-specific ion channel FluC from Shewanella piezotolerans (strain WP3 / JCM 13877).